The chain runs to 70 residues: Small ribosomal subunit protein bS21A (70 aa).

The protein belongs to the bacterial ribosomal protein bS21 family.

This is Small ribosomal subunit protein bS21A from Paraburkholderia xenovorans (strain LB400).